An 820-amino-acid chain; its full sequence is MGNLEANDVGNNSRKYNHPFEPYDIQIQLMDAIYDAIDNYKIGLFESPTGTGKTLSLICSSMTWLREYKKNSTFRETEDSESEDEPEWVKQAYQKTIANRTKVRAQEYERLLDDLSENYDVSKVSVLPEKKVKRQKPEQEQDENFIPADYYSDSELDSKYENDKLTSEINELLSRVDGPKETVEPVNDCPVKIFFSSRTHSQLSQFSHQLNMTEFESSLDNIPERIKFSPLASRKQLCIHPKISKLSNVSSINDACIDLQQSSKNSCEYIPKLHNTQSEEIVKKFSDLSFTKIHDIEDLGKLGNKLKICPYYSVRKGIDVTEIIALPYQMLLQDSTRSALNLNIDDSIIIIDEAHNLLDVISSIYSVSITSNELSDITKSLKFYLNKFIKRLNSGNRINIMKLIKLCQVLEKFISSNSKDGKIKHGDEIITSDIFEGTTGDLVNIHKIEQFLNKSKIAYKIESYMQKLNDSESIKNRSNPLLFKITKFLKCLTNPSKEGKFFWDKTNDSVSINYMLLDPSEIFRDIVKRARCVLLCGGTMEPMNDYTNYLFPYIPPEQIKKFSCGHIIPQENLEVFPIGNYNDISFEFSFDKRNNSKMIIELGHAILNIIESTPDGIVIFFPSYKYLNVVMNVWRQNKIIESLTKVKAIFQEPEDSSKVEKVLNDYSSTNKSEKHSALLLSVVGGKMSEGINFSDELARGVIMIGLPFPNIFSAELIAKRKFIEESTIAKGGTKSQAMVNAKNFYENICMRAVNQSIGRSIRHKNDYSIIYLFDQRYGSDKIQDKLSGWVKQKLFTRGRCTDFNQVIKETQDFFRQKLLG.

Residues Asn12 to Leu410 form the Helicase ATP-binding domain. ATP is bound at residue Ser47 to Thr54. Cys238, Cys256, Cys267, and Cys309 together coordinate [4Fe-4S] cluster. A DEAH box motif is present at residues Asp352–His355.

This sequence belongs to the DEAD box helicase family. DEAH subfamily. DDX11/CHL1 sub-subfamily. Requires [4Fe-4S] cluster as cofactor.

It localises to the nucleus. The catalysed reaction is Couples ATP hydrolysis with the unwinding of duplex DNA at the replication fork by translocating in the 5'-3' direction. This creates two antiparallel DNA single strands (ssDNA). The leading ssDNA polymer is the template for DNA polymerase III holoenzyme which synthesizes a continuous strand.. The enzyme catalyses ATP + H2O = ADP + phosphate + H(+). In terms of biological role, ATP-dependent DNA helicase important for chromosome transmission and normal cell cycle progression in G(2)/M. May have a role in changing DNA topology to allow the loading of proteins involved in maintaining sister chromatid cohesion in the vicinity of the centromeres. Has a specific role in chromosome segregation during meiosis II. The sequence is that of ATP-dependent DNA helicase CHL1 (CHL1) from Debaryomyces hansenii (strain ATCC 36239 / CBS 767 / BCRC 21394 / JCM 1990 / NBRC 0083 / IGC 2968) (Yeast).